We begin with the raw amino-acid sequence, 348 residues long: Nicotinate-nucleotide--dimethylbenzimidazole phosphoribosyltransferase (348 aa).

The Proton acceptor role is filled by glutamate 317.

This sequence belongs to the CobT family.

The catalysed reaction is 5,6-dimethylbenzimidazole + nicotinate beta-D-ribonucleotide = alpha-ribazole 5'-phosphate + nicotinate + H(+). Its pathway is nucleoside biosynthesis; alpha-ribazole biosynthesis; alpha-ribazole from 5,6-dimethylbenzimidazole: step 1/2. Catalyzes the synthesis of alpha-ribazole-5'-phosphate from nicotinate mononucleotide (NAMN) and 5,6-dimethylbenzimidazole (DMB). The sequence is that of Nicotinate-nucleotide--dimethylbenzimidazole phosphoribosyltransferase from Clostridioides difficile (strain 630) (Peptoclostridium difficile).